Consider the following 199-residue polypeptide: mRNA export protein mlo3 (199 aa).

Positions 1–41 (MSMELDQSLDAIIASKPKGGIRKRRARSNKPKPTKNAKPAV) are disordered. Over residues 19 to 35 (GGIRKRRARSNKPKPTK) the composition is skewed to basic residues. The region spanning 55 to 134 (SKIIVSNLPT…RKMKVEIILD (80 aa)) is the RRM domain. A disordered region spans residues 144 to 199 (ARVSPASNASATASKNGAKSSKRKTTRRRRTPNRPKKSAEELDKEMDDYFGSNEKE). The segment covering 148–161 (PASNASATASKNGA) has biased composition (polar residues). Positions 163–179 (SSKRKTTRRRRTPNRPK) are enriched in basic residues.

Interacts with rpn15/dss1, mex67 and uap56.

The protein localises to the nucleus. In terms of biological role, has a role in the mRNA export process. Interferes with mitotic chromosome segregation when overexpressed. In Schizosaccharomyces pombe (strain 972 / ATCC 24843) (Fission yeast), this protein is mRNA export protein mlo3 (mlo3).